The sequence spans 525 residues: MEIMESGDPVIQWDRKLSELSEAAESDSLYNNTPFSELLDDSALLDVLGQLMGDPFLTEKYEMMEVEMNPSSPSPMIKAEHSYSLCGDSRPQSPFTHASSDDNFSDTDLTGDDWCLNGELTATTPTTKIKVEIPLEETPGLTPSVTLATSAVSASPEVGVSSQLPVPEQVKLLSPVALPQIKLEPHEVDQFLNLCPKEVAPTEALQMPPTPPSSHGSDSEGGQSPTRSLPPSSPVQSQAGGKMAARSPSALSNSPLLTAPHKLQGSGPLMLTEEEKRTLVAEGYPIPTKLPLTKAEEKALKKIRRKIKNKISAQESRRKKKEYMDSLEKRVENSSSENSELRKKVEVLESTNRTLLQQLQRLQAMVTGKVTRSCKAAGTQTGTCLMMVVLCFAVIFGSFTQNLDMYSSSSKTIHEPSQYSAPESYAASIVRSRKLLIFEEHQAVEELHSSAVMLETQDTWEVQADTISKQQAALLEELHLSQEKPFSLSNDSSSDMPVRHRFTSEFGHNDTTKVIELDRTVNTTS.

Residues 1–382 are Cytoplasmic-facing; the sequence is MEIMESGDPV…SCKAAGTQTG (382 aa). Disordered stretches follow at residues 85–104, 203–267, and 309–338; these read LCGDSRPQSPFTHASSDDNF, EALQ…QGSG, and NKISAQESRRKKKEYMDSLEKRVENSSSEN. 2 stretches are compositionally biased toward polar residues: residues 90 to 102 and 213 to 239; these read RPQSPFTHASSDD and SSHGSDSEGGQSPTRSLPPSSPVQSQA. Residues 299 to 362 enclose the bZIP domain; it reads ALKKIRRKIK…RTLLQQLQRL (64 aa). Residues 301 to 330 form a basic motif region; it reads KKIRRKIKNKISAQESRRKKKEYMDSLEKR. Positions 322 to 332 are enriched in basic and acidic residues; the sequence is EYMDSLEKRVE. Residues 341–362 are leucine-zipper; sequence LRKKVEVLESTNRTLLQQLQRL. Residues 383-403 form a helical; Signal-anchor for type II membrane protein membrane-spanning segment; it reads TCLMMVVLCFAVIFGSFTQNL. Residues 404 to 525 are Lumenal-facing; the sequence is DMYSSSSKTI…ELDRTVNTTS (122 aa). Residues 433–436 carry the S1P recognition motif; it reads RKLL. N-linked (GlcNAc...) asparagine glycans are attached at residues asparagine 490, asparagine 509, and asparagine 522.

Belongs to the bZIP family. ATF subfamily. Binds DNA as a dimer. In terms of processing, upon ER stress, translocated to the Golgi apparatus, where it is processed by regulated intramembrane proteolysis (RIP) to release the cytosol-facing N-terminal transcription factor domain. The cleavage is performed sequentially by site-1 and site-2 proteases (S1P/mbtps1 and S2P/mbtps2).

The protein resides in the endoplasmic reticulum membrane. It is found in the nucleus. Transcription factor involved in unfolded protein response (UPR). In the absence of endoplasmic reticulum (ER) stress, inserted into ER membranes, with N-terminal DNA-binding and transcription activation domains oriented toward the cytosolic face of the membrane. In response to ER stress, transported to the Golgi, where it is cleaved in a site-specific manner by resident proteases S1P/mbtps1 and S2P/mbtps2. The released N-terminal cytosolic domain is translocated to the nucleus to effect transcription of specific target genes. Plays a critical role in chondrogenesis. May protect neuroblastoma cells from ER stress-induced death. In vitro activates transcription of target genes via direct binding to the CRE site. This is Cyclic AMP-responsive element-binding protein 3-like protein 2 (creb3l2) from Xenopus laevis (African clawed frog).